The sequence spans 279 residues: Thymidylate synthase (279 aa).

Arg21 is a binding site for dUMP. His51 contributes to the (6R)-5,10-methylene-5,6,7,8-tetrahydrofolate binding site. 126-127 is a dUMP binding site; that stretch reads RR. The Nucleophile role is filled by Cys159. Residues 179–182, Asn190, and 220–222 each bind dUMP; these read RSAD and HLY. Residue Asp182 coordinates (6R)-5,10-methylene-5,6,7,8-tetrahydrofolate. Ala278 lines the (6R)-5,10-methylene-5,6,7,8-tetrahydrofolate pocket.

Belongs to the thymidylate synthase family. Bacterial-type ThyA subfamily. In terms of assembly, homodimer.

The protein localises to the cytoplasm. It carries out the reaction dUMP + (6R)-5,10-methylene-5,6,7,8-tetrahydrofolate = 7,8-dihydrofolate + dTMP. Its pathway is pyrimidine metabolism; dTTP biosynthesis. Catalyzes the reductive methylation of 2'-deoxyuridine-5'-monophosphate (dUMP) to 2'-deoxythymidine-5'-monophosphate (dTMP) while utilizing 5,10-methylenetetrahydrofolate (mTHF) as the methyl donor and reductant in the reaction, yielding dihydrofolate (DHF) as a by-product. This enzymatic reaction provides an intracellular de novo source of dTMP, an essential precursor for DNA biosynthesis. The protein is Thymidylate synthase of Marinobacter nauticus (strain ATCC 700491 / DSM 11845 / VT8) (Marinobacter aquaeolei).